The primary structure comprises 159 residues: Ecotin (159 aa).

An N-terminal signal peptide occupies residues 1–22 (MRPTPLSTILALTMAATAPAMA). Cys68 and Cys105 are joined by a disulfide.

This sequence belongs to the protease inhibitor I11 (ecotin) family. Homodimer.

Its subcellular location is the periplasm. Its function is as follows. General inhibitor of family S1 serine proteases. The protein is Ecotin of Pseudomonas putida (strain W619).